Here is a 59-residue protein sequence, read N- to C-terminus: UPF0337 protein MM_2677 (59 aa).

Composition is skewed to basic and acidic residues over residues 1-24 and 33-59; these read MKEG…KESA and MEAK…EFEK. The disordered stretch occupies residues 1-59; that stretch reads MKEGTKEEMEGKFSKAKGEIKESAGEMTGDIEMEAKGEAEKRKGEAQEKVGKIRKEFEK.

This sequence belongs to the UPF0337 (CsbD) family.

In Methanosarcina mazei (strain ATCC BAA-159 / DSM 3647 / Goe1 / Go1 / JCM 11833 / OCM 88) (Methanosarcina frisia), this protein is UPF0337 protein MM_2677.